A 197-amino-acid polypeptide reads, in one-letter code: Glycerol-3-phosphate acyltransferase (197 aa).

5 consecutive transmembrane segments (helical) span residues 1-21 (MNIL…GFLI), 78-98 (LIEV…IWLG), 111-131 (MFLA…LIVL), 136-155 (FVSL…MFFY), and 159-176 (FIHT…LVIW).

Belongs to the PlsY family. As to quaternary structure, probably interacts with PlsX.

The protein resides in the cell inner membrane. The catalysed reaction is an acyl phosphate + sn-glycerol 3-phosphate = a 1-acyl-sn-glycero-3-phosphate + phosphate. It participates in lipid metabolism; phospholipid metabolism. Functionally, catalyzes the transfer of an acyl group from acyl-phosphate (acyl-PO(4)) to glycerol-3-phosphate (G3P) to form lysophosphatidic acid (LPA). This enzyme utilizes acyl-phosphate as fatty acyl donor, but not acyl-CoA or acyl-ACP. The chain is Glycerol-3-phosphate acyltransferase from Prochlorococcus marinus (strain MIT 9215).